Consider the following 435-residue polypeptide: MKTTYVNATIVTMNEQNEVIENGYIIVENDKIIDVNSGEFASDFEVDEVIDMKGKWVLPGLVNTHTHVVMSLLRGIGDDMLLQPWLETRIWPLESQFTSQIAVASTELGLLEMVKSGTTSFSDMFNPIGVDQDAIMETVSRSGMRAAVSRTLFSFGTKEDEKKAIEEAEKYVKRYYNESGMLTTMVAPHSPYTCSTELLEECARIAVENQTMVHIHLSETEREVRDIEAQYGKRPVEYAASCGLFKRSTVIAHGVVLNDNERAFLAEHDVRVAHNPNSNLKLGSGIANVKAMLEAGIKVGIATDSVASNNNLDMFEEMRIATLLQKGIHQDATALPVETALTLATKGAAEVIGMKQTGSLEVGKCADFITIDPSNKPHLQPADEVLSHLVYAASGKDISDVIINGKRVVWNGECKTLDEERIIFEASRYKRGLQR.

Zn(2+) is bound by residues His65 and His67. Substrate is bound by residues Glu94, Arg150, and His189. His216 is a Zn(2+) binding site. The substrate site is built by Glu219 and Asp304. Residue Asp304 participates in Zn(2+) binding.

Belongs to the metallo-dependent hydrolases superfamily. MTA/SAH deaminase family. Requires Zn(2+) as cofactor.

The enzyme catalyses S-adenosyl-L-homocysteine + H2O + H(+) = S-inosyl-L-homocysteine + NH4(+). It catalyses the reaction S-methyl-5'-thioadenosine + H2O + H(+) = S-methyl-5'-thioinosine + NH4(+). In terms of biological role, catalyzes the deamination of 5-methylthioadenosine and S-adenosyl-L-homocysteine into 5-methylthioinosine and S-inosyl-L-homocysteine, respectively. Is also able to deaminate adenosine. The polypeptide is 5-methylthioadenosine/S-adenosylhomocysteine deaminase (Bacillus cereus (strain 03BB102)).